The chain runs to 357 residues: Chorismate synthase (357 aa).

NADP(+)-binding residues include Arg48 and Arg54. FMN contacts are provided by residues 125–127 (RSS), 243–244 (NA), Gly283, 298–302 (KPTSS), and Arg324.

It belongs to the chorismate synthase family. As to quaternary structure, homotetramer. The cofactor is FMNH2.

It catalyses the reaction 5-O-(1-carboxyvinyl)-3-phosphoshikimate = chorismate + phosphate. The protein operates within metabolic intermediate biosynthesis; chorismate biosynthesis; chorismate from D-erythrose 4-phosphate and phosphoenolpyruvate: step 7/7. Its function is as follows. Catalyzes the anti-1,4-elimination of the C-3 phosphate and the C-6 proR hydrogen from 5-enolpyruvylshikimate-3-phosphate (EPSP) to yield chorismate, which is the branch point compound that serves as the starting substrate for the three terminal pathways of aromatic amino acid biosynthesis. This reaction introduces a second double bond into the aromatic ring system. The chain is Chorismate synthase from Pasteurella multocida (strain Pm70).